A 404-amino-acid polypeptide reads, in one-letter code: F-box protein At2g17036 (404 aa).

The F-box domain occupies 2 to 50 (MDWATLPKDLLDLISKCLESSFDLIQFRSVCSSWRSAAGPKRLLWAHNL).

The protein is F-box protein At2g17036 of Arabidopsis thaliana (Mouse-ear cress).